Here is a 240-residue protein sequence, read N- to C-terminus: Uridylate kinase (240 aa).

12-15 provides a ligand contact to ATP; sequence KLSG. The segment at 20–25 is involved in allosteric activation by GTP; the sequence is GDKGFG. Position 54 (Gly54) interacts with UMP. Positions 55 and 59 each coordinate ATP. UMP-binding positions include Asp74 and 135–142; that span reads TGSPYFST. Residues Asn163, Tyr169, and Asp172 each contribute to the ATP site.

The protein belongs to the UMP kinase family. As to quaternary structure, homohexamer.

Its subcellular location is the cytoplasm. The catalysed reaction is UMP + ATP = UDP + ADP. It participates in pyrimidine metabolism; CTP biosynthesis via de novo pathway; UDP from UMP (UMPK route): step 1/1. With respect to regulation, allosterically activated by GTP. Inhibited by UTP. Its function is as follows. Catalyzes the reversible phosphorylation of UMP to UDP. The chain is Uridylate kinase from Levilactobacillus brevis (strain ATCC 367 / BCRC 12310 / CIP 105137 / JCM 1170 / LMG 11437 / NCIMB 947 / NCTC 947) (Lactobacillus brevis).